The following is a 203-amino-acid chain: Small ribosomal subunit protein uS4 (203 aa).

The S4 RNA-binding domain maps to 93–173 (RRFDNVVFRA…IPSWIQVDKA (81 aa)).

Belongs to the universal ribosomal protein uS4 family. As to quaternary structure, part of the 30S ribosomal subunit. Contacts protein S5. The interaction surface between S4 and S5 is involved in control of translational fidelity.

In terms of biological role, one of the primary rRNA binding proteins, it binds directly to 16S rRNA where it nucleates assembly of the body of the 30S subunit. Functionally, with S5 and S12 plays an important role in translational accuracy. In Pelodictyon phaeoclathratiforme (strain DSM 5477 / BU-1), this protein is Small ribosomal subunit protein uS4.